A 121-amino-acid chain; its full sequence is Trypsin/alpha-amylase inhibitor CMX2 (121 aa).

Residues 1–24 (MAFKHQLILSTAILLAVLAAASAS) form the signal peptide.

It belongs to the protease inhibitor I6 (cereal trypsin/alpha-amylase inhibitor) family.

It is found in the secreted. This is Trypsin/alpha-amylase inhibitor CMX2 from Triticum aestivum (Wheat).